Reading from the N-terminus, the 51-residue chain is Insulin (51 aa).

3 disulfides stabilise this stretch: C7-C37, C19-C50, and C36-C41.

Belongs to the insulin family. Heterodimer of a B chain and an A chain linked by two disulfide bonds.

The protein resides in the secreted. Its function is as follows. Insulin decreases blood glucose concentration. It increases cell permeability to monosaccharides, amino acids and fatty acids. It accelerates glycolysis, the pentose phosphate cycle, and glycogen synthesis in liver. The sequence is that of Insulin (INS) from Hystrix cristata (North African crested porcupine).